Here is a 287-residue protein sequence, read N- to C-terminus: Pyridoxal kinase PdxY (287 aa).

Substrate-binding positions include serine 9 and 44-45; that span reads TQ. Residues aspartate 111, alanine 143, glutamate 148, lysine 181, and 208–211 each bind ATP; that span reads RPLV. Residue aspartate 223 coordinates substrate.

The protein belongs to the pyridoxine kinase family. PdxY subfamily. Homodimer. Requires Mg(2+) as cofactor.

The catalysed reaction is pyridoxal + ATP = pyridoxal 5'-phosphate + ADP + H(+). Its pathway is cofactor metabolism; pyridoxal 5'-phosphate salvage; pyridoxal 5'-phosphate from pyridoxal: step 1/1. Its function is as follows. Pyridoxal kinase involved in the salvage pathway of pyridoxal 5'-phosphate (PLP). Catalyzes the phosphorylation of pyridoxal to PLP. The chain is Pyridoxal kinase PdxY from Photorhabdus laumondii subsp. laumondii (strain DSM 15139 / CIP 105565 / TT01) (Photorhabdus luminescens subsp. laumondii).